The primary structure comprises 157 residues: Jacalin-related lectin 15 (157 aa).

The Jacalin-type lectin domain maps to Ala-13–Pro-152.

It belongs to the jacalin lectin family. In terms of tissue distribution, expressed in stems, leaves and flowers. Not detected in roots.

In terms of biological role, confers broad resistance to potexviruses. Inhibits virus accumulation at the cellular level. The polypeptide is Jacalin-related lectin 15 (JAL15) (Arabidopsis thaliana (Mouse-ear cress)).